Here is a 382-residue protein sequence, read N- to C-terminus: Protein phosphatase 1A (382 aa).

A lipid anchor (N-myristoyl glycine) is attached at G2. Positions 23–291 constitute a PPM-type phosphatase domain; the sequence is RYGLSSMQGW…DNMSVILICF (269 aa). Residues D60, G61, D239, and D282 each contribute to the Mn(2+) site. Phosphoserine is present on residues S375 and S377.

It belongs to the PP2C family. In terms of assembly, monomer. Interacts with SMAD2; the interaction dephosphorylates SMAD2 in its C-terminal SXS motif resulting in disruption of the SMAD2/SMAD4 complex, SMAD2 nuclear export and termination of the TGF-beta-mediated signaling. Interacts with SMAD2; the interaction dephosphorylates SMAD2 in its C-terminal SXS motif resulting in disruption of the SMAD2/SMAD4 complex, SMAD2 nuclear export and termination of the TGF-beta-mediated signaling. Interacts with the phosphorylated form of IKBKB/IKKB. Requires Mg(2+) as cofactor. The cofactor is Mn(2+). In terms of processing, N-myristoylation is essential for the recognition of its substrates for dephosphorylation.

It is found in the nucleus. The protein resides in the cytoplasm. It localises to the cytosol. The protein localises to the membrane. It catalyses the reaction O-phospho-L-seryl-[protein] + H2O = L-seryl-[protein] + phosphate. It carries out the reaction O-phospho-L-threonyl-[protein] + H2O = L-threonyl-[protein] + phosphate. Enzyme with a broad specificity. Negatively regulates TGF-beta signaling through dephosphorylating SMAD2 and SMAD3, resulting in their dissociation from SMAD4, nuclear export of the SMADs and termination of the TGF-beta-mediated signaling. Dephosphorylates PRKAA1 and PRKAA2. Plays an important role in the termination of TNF-alpha-mediated NF-kappa-B activation through dephosphorylating and inactivating IKBKB/IKKB. This is Protein phosphatase 1A (PPM1A) from Bos taurus (Bovine).